The chain runs to 103 residues: Small ribosomal subunit protein uS10 (103 aa).

This sequence belongs to the universal ribosomal protein uS10 family. As to quaternary structure, part of the 30S ribosomal subunit.

Functionally, involved in the binding of tRNA to the ribosomes. The sequence is that of Small ribosomal subunit protein uS10 from Acidovorax sp. (strain JS42).